The chain runs to 346 residues: Phosphate acyltransferase (346 aa).

The protein belongs to the PlsX family. In terms of assembly, homodimer. Probably interacts with PlsY.

It localises to the cytoplasm. It catalyses the reaction a fatty acyl-[ACP] + phosphate = an acyl phosphate + holo-[ACP]. It participates in lipid metabolism; phospholipid metabolism. Catalyzes the reversible formation of acyl-phosphate (acyl-PO(4)) from acyl-[acyl-carrier-protein] (acyl-ACP). This enzyme utilizes acyl-ACP as fatty acyl donor, but not acyl-CoA. This chain is Phosphate acyltransferase, found in Delftia acidovorans (strain DSM 14801 / SPH-1).